We begin with the raw amino-acid sequence, 72 residues long: Translation initiation factor IF-1 (72 aa).

Positions 2-72 (AKEDCIEMQG…NKGRIIFRSR (71 aa)) constitute an S1-like domain.

It belongs to the IF-1 family. In terms of assembly, component of the 30S ribosomal translation pre-initiation complex which assembles on the 30S ribosome in the order IF-2 and IF-3, IF-1 and N-formylmethionyl-tRNA(fMet); mRNA recruitment can occur at any time during PIC assembly.

It is found in the cytoplasm. One of the essential components for the initiation of protein synthesis. Stabilizes the binding of IF-2 and IF-3 on the 30S subunit to which N-formylmethionyl-tRNA(fMet) subsequently binds. Helps modulate mRNA selection, yielding the 30S pre-initiation complex (PIC). Upon addition of the 50S ribosomal subunit IF-1, IF-2 and IF-3 are released leaving the mature 70S translation initiation complex. This is Translation initiation factor IF-1 from Pasteurella multocida (strain Pm70).